The following is a 430-amino-acid chain: MLDPNLLRNELDAVAVKLARRGFKLDLDLLRSQEERRKVLQVETETLQAERNSRSKSIGAAKARGEDIEPLRREVNELGDKLDTAKAALDQLQAEIRDYALAIPNLPDDEVPDGKDDSDNLEVSRWGEPRQYDFAVRDHVDLGEMAGGLDFAAAVKLTGSRFVVMKGQIARMHRALSQFMLDLHTEQHGYQETYVPYLVNHATLFGTGQLPKFGEDLFHTKPLEEESDSSNYALIPTAEVPLTNLVRDEILEEESLPLKMTAHTPCFRAEAGSYGRDTRGLIRMHQFDKVEMVQIVRPEDSMTTLEELTGHAEKVLQLLNLPYRKMLLCTGDMGAGSCKTYDLEVWLPAQDTYREISSCSNMWDYQARRMQARCRSKTEKKPRLVHTLNGSGLAVGRTLVAVLENYQQADGRIQVPEVLRPYMGGLEYIG.

Residue 237–239 (TAE) coordinates L-serine. ATP is bound at residue 268 to 270 (RAE). An L-serine-binding site is contributed by Glu-291. Position 355 to 358 (355 to 358 (EISS)) interacts with ATP. Ser-391 is a binding site for L-serine.

The protein belongs to the class-II aminoacyl-tRNA synthetase family. Type-1 seryl-tRNA synthetase subfamily. Homodimer. The tRNA molecule binds across the dimer.

The protein localises to the cytoplasm. The catalysed reaction is tRNA(Ser) + L-serine + ATP = L-seryl-tRNA(Ser) + AMP + diphosphate + H(+). It catalyses the reaction tRNA(Sec) + L-serine + ATP = L-seryl-tRNA(Sec) + AMP + diphosphate + H(+). The protein operates within aminoacyl-tRNA biosynthesis; selenocysteinyl-tRNA(Sec) biosynthesis; L-seryl-tRNA(Sec) from L-serine and tRNA(Sec): step 1/1. In terms of biological role, catalyzes the attachment of serine to tRNA(Ser). Is also able to aminoacylate tRNA(Sec) with serine, to form the misacylated tRNA L-seryl-tRNA(Sec), which will be further converted into selenocysteinyl-tRNA(Sec). In Serratia proteamaculans (strain 568), this protein is Serine--tRNA ligase.